Consider the following 210-residue polypeptide: Ras-related protein Rab-2-B (210 aa).

Residue glycine 13–cysteine 21 participates in GTP binding. An Effector region motif is present at residues histidine 35–phenylalanine 43. GTP contacts are provided by residues aspartate 61 to glutamine 65, asparagine 119 to aspartate 122, and serine 149 to lysine 151. S-geranylgeranyl cysteine attachment occurs at residues cysteine 208 and cysteine 209.

The protein belongs to the small GTPase superfamily. Rab family.

It is found in the endoplasmic reticulum membrane. The protein localises to the golgi apparatus membrane. Its function is as follows. Protein transport. Probably involved in vesicular traffic. The protein is Ras-related protein Rab-2-B (RAB2B) of Zea mays (Maize).